The primary structure comprises 239 residues: Succinate dehydrogenase [ubiquinone] iron-sulfur subunit (239 aa).

Residues 24–99 enclose the 2Fe-2S ferredoxin-type domain; it reads AEAKFSVHPI…NANIITIYPL (76 aa). Positions 63, 68, 71, and 83 each coordinate [2Fe-2S] cluster. One can recognise a 4Fe-4S ferredoxin-type domain in the interval 142–172; it reads DRSELNGIYECILCACCSASCPSYWWNHDKY. [4Fe-4S] cluster is bound by residues C152, C155, and C158. A [3Fe-4S] cluster-binding site is contributed by C162. W167 contributes to the a ubiquinone binding site. C209 and C215 together coordinate [3Fe-4S] cluster. A [4Fe-4S] cluster-binding site is contributed by C219.

This sequence belongs to the succinate dehydrogenase/fumarate reductase iron-sulfur protein family. As to quaternary structure, component of complex II composed of four subunits: a flavoprotein (FP), an iron-sulfur protein (IP), and a cytochrome b composed of a large and a small subunit. Requires [2Fe-2S] cluster as cofactor. The cofactor is [3Fe-4S] cluster. [4Fe-4S] cluster serves as cofactor.

It localises to the mitochondrion inner membrane. The enzyme catalyses a quinone + succinate = fumarate + a quinol. It participates in carbohydrate metabolism; tricarboxylic acid cycle; fumarate from succinate (eukaryal route): step 1/1. Functionally, iron-sulfur protein (IP) subunit of succinate dehydrogenase (SDH) that is involved in complex II of the mitochondrial electron transport chain and is responsible for transferring electrons from succinate to ubiquinone (coenzyme Q). This is Succinate dehydrogenase [ubiquinone] iron-sulfur subunit (SDH2) from Porphyra purpurea (Red seaweed).